The primary structure comprises 147 residues: Hemoglobin subunit beta (147 aa).

Val-2 is subject to N-acetylvaline. The Globin domain occupies 3 to 147 (NLSGDEKNAV…VANALAHRYH (145 aa)). Phosphoserine is present on Ser-45. Lys-60 carries the N6-acetyllysine modification. His-64 lines the heme b pocket. N6-acetyllysine is present on Lys-83. His-93 contacts heme b. Cys-94 is subject to S-nitrosocysteine.

Belongs to the globin family. As to quaternary structure, heterotetramer of two alpha chains and two beta chains. Red blood cells.

Functionally, involved in oxygen transport from the lung to the various peripheral tissues. The polypeptide is Hemoglobin subunit beta (HBB) (Vicugna pacos (Alpaca)).